The chain runs to 1251 residues: Phospholipid-transporting ATPase IC (1251 aa).

Residues 1–54 (MSTERDSETTFDEDSQPNDEVVPYSDDETEDELDDQGSAVEPEQNRVNREAEEN) are disordered. Topologically, residues 1–108 (MSTERDSETT…TYKYNAFTFI (108 aa)) are cytoplasmic. Acidic residues predominate over residues 25–35 (SDDETEDELDD). Residues 43-54 (EQNRVNREAEEN) show a composition bias toward basic and acidic residues. The helical transmembrane segment at 109-130 (PMNLFEQFKRAANLYFLALLIL) threads the bilayer. Topologically, residues 131-136 (QAVPQI) are exoplasmic loop. A helical transmembrane segment spans residues 137–156 (STLAWYTTLVPLLVVLGVTA). The Cytoplasmic portion of the chain corresponds to 157-340 (IKDLVDDVAR…TKIDYLMNYM (184 aa)). A helical transmembrane segment spans residues 341-362 (VYTIFVVLILLSAGLAIGHAYW). The Exoplasmic loop segment spans residues 363-389 (EAQVGNSSWYLYDGEDDTPSYRGFLIF). The chain crosses the membrane as a helical span at residues 390–411 (WGYIIVLNTMVPISLYVSVEVI). Residues 412–949 (RLGQSHFINW…GRWSYIRMCK (538 aa)) lie on the Cytoplasmic side of the membrane. The 4-aspartylphosphate intermediate role is filled by aspartate 454. ATP-binding residues include aspartate 454, lysine 455, threonine 456, glutamate 555, phenylalanine 596, lysine 619, arginine 652, threonine 732, glycine 733, aspartate 734, arginine 867, and lysine 873. Aspartate 454 contributes to the Mg(2+) binding site. A Mg(2+)-binding site is contributed by threonine 456. Mg(2+) is bound at residue aspartate 893. ATP contacts are provided by asparagine 896 and aspartate 897. Aspartate 897 contacts Mg(2+). A helical membrane pass occupies residues 950 to 970 (FLRYFFYKNFAFTLVHFWYSF). Residues 971-982 (FNGYSAQTAYED) lie on the Exoplasmic loop side of the membrane. A helical transmembrane segment spans residues 983-1002 (WFITLYNVLYTSLPVLLMGL). Topologically, residues 1003-1032 (LDQDVSDKLSLRFPGLYIVGQRDLLFNYKR) are cytoplasmic. The helical transmembrane segment at 1033–1054 (FFVSLLHGVLTSMILFFIPLGA) threads the bilayer. Over 1055-1068 (YLQTVGQDGEAPSD) the chain is Exoplasmic loop. A helical membrane pass occupies residues 1069–1091 (YQSFAVTIASALVITVNFQIGLD). Over 1092 to 1097 (TSYWTF) the chain is Cytoplasmic. A helical membrane pass occupies residues 1098–1118 (VNAFSIFGSIALYFGIMFDFH). Residues 1119-1138 (SAGIHVLFPSAFQFTGTASN) lie on the Exoplasmic loop side of the membrane. The chain crosses the membrane as a helical span at residues 1139-1163 (ALRQPYIWLTIILAVAVCLLPVVAI). The Cytoplasmic segment spans residues 1164-1251 (RFLSMTIWPS…TAEYRRTGDS (88 aa)). A Phosphoserine modification is found at serine 1223.

The protein belongs to the cation transport ATPase (P-type) (TC 3.A.3) family. Type IV subfamily. As to quaternary structure, component of a P4-ATPase flippase complex which consists of a catalytic alpha subunit ATP8B1 and an accessory beta subunit TMEM30A. The flippase ATP8B1:TMEM30A complex can form an intermediate phosphoenzyme in vitro. Also interacts with beta subunit TMEM30B. It depends on Mg(2+) as a cofactor. In terms of tissue distribution, found in most tissues except brain and skeletal muscle. Most abundant in pancreas and small intestine.

The protein localises to the cell membrane. The protein resides in the apical cell membrane. It localises to the cell projection. It is found in the stereocilium. Its subcellular location is the endoplasmic reticulum. The protein localises to the golgi apparatus. The catalysed reaction is ATP + H2O + phospholipidSide 1 = ADP + phosphate + phospholipidSide 2.. The enzyme catalyses a 1,2-diacyl-sn-glycero-3-phosphocholine(out) + ATP + H2O = a 1,2-diacyl-sn-glycero-3-phosphocholine(in) + ADP + phosphate + H(+). It catalyses the reaction a 1,2-diacyl-sn-glycero-3-phospho-L-serine(out) + ATP + H2O = a 1,2-diacyl-sn-glycero-3-phospho-L-serine(in) + ADP + phosphate + H(+). Catalytic component of a P4-ATPase flippase complex which catalyzes the hydrolysis of ATP coupled to the transport of phospholipids, in particular phosphatidylcholines (PC), from the outer to the inner leaflet of the plasma membrane. May participate in the establishment of the canalicular membrane integrity by ensuring asymmetric distribution of phospholipids in the canicular membrane. Thus may have a role in the regulation of bile acids transport into the canaliculus, uptake of bile acids from intestinal contents into intestinal mucosa or both and protect hepatocytes from bile salts. Involved in the microvillus formation in polarized epithelial cells; the function seems to be independent from its flippase activity. Participates in correct apical membrane localization of CDC42, CFTR and SLC10A2. Enables CDC42 clustering at the apical membrane during enterocyte polarization through the interaction between CDC42 polybasic region and negatively charged membrane lipids provided by ATP8B1. Together with TMEM30A is involved in uptake of the synthetic drug alkylphospholipid perifosine. Required for the preservation of cochlear hair cells in the inner ear. May act as cardiolipin transporter during inflammatory injury. The chain is Phospholipid-transporting ATPase IC from Homo sapiens (Human).